We begin with the raw amino-acid sequence, 215 residues long: Adenylate kinase (215 aa).

10–15 (GAGKGT) contacts ATP. Residues 30–59 (STGDILRENVKNQTELGKKAKEYMDKGLLV) are NMP. AMP-binding positions include Thr-31, Arg-36, 57–59 (LLV), 85–88 (GFPR), and Gln-92. The interval 126–163 (GRRICKSCGASFHVVYRPPKKEGICDICGGQLYQREDD) is LID. ATP is bound at residue Arg-127. Positions 130 and 133 each coordinate Zn(2+). 136-137 (SF) serves as a coordination point for ATP. Residues Cys-150 and Cys-153 each contribute to the Zn(2+) site. Residues Arg-160 and Arg-171 each contribute to the AMP site. ATP is bound at residue Glu-199.

It belongs to the adenylate kinase family. In terms of assembly, monomer.

It localises to the cytoplasm. The catalysed reaction is AMP + ATP = 2 ADP. It participates in purine metabolism; AMP biosynthesis via salvage pathway; AMP from ADP: step 1/1. Functionally, catalyzes the reversible transfer of the terminal phosphate group between ATP and AMP. Plays an important role in cellular energy homeostasis and in adenine nucleotide metabolism. The sequence is that of Adenylate kinase from Caldicellulosiruptor saccharolyticus (strain ATCC 43494 / DSM 8903 / Tp8T 6331).